Consider the following 190-residue polypeptide: Ribosome maturation factor RimM (190 aa).

The 77-residue stretch at 114 to 190 (DDEYYWVDLI…CITVDWQPDY (77 aa)) folds into the PRC barrel domain.

The protein belongs to the RimM family. As to quaternary structure, binds ribosomal protein uS19.

Its subcellular location is the cytoplasm. An accessory protein needed during the final step in the assembly of 30S ribosomal subunit, possibly for assembly of the head region. Essential for efficient processing of 16S rRNA. May be needed both before and after RbfA during the maturation of 16S rRNA. It has affinity for free ribosomal 30S subunits but not for 70S ribosomes. This is Ribosome maturation factor RimM from Acidovorax sp. (strain JS42).